The chain runs to 244 residues: Transcriptional activator protein FnrA (244 aa).

Residues 159-232 (KTADERIATF…GKEVRILDSI (74 aa)) enclose the HTH crp-type domain. Positions 192-211 (RNEIGNYLGLAVETVSRVFT) form a DNA-binding region, H-T-H motif.

Functionally, transcriptional regulator of arginine deiminase. This is Transcriptional activator protein FnrA (fnrA) from Stutzerimonas stutzeri (Pseudomonas stutzeri).